Reading from the N-terminus, the 218-residue chain is Superoxide dismutase [Mn], mitochondrial (218 aa).

Residues histidine 27, histidine 84, aspartate 174, and histidine 178 each contribute to the Mn(2+) site.

It belongs to the iron/manganese superoxide dismutase family. As to quaternary structure, homotetramer. The cofactor is Mn(2+).

The protein localises to the mitochondrion matrix. The catalysed reaction is 2 superoxide + 2 H(+) = H2O2 + O2. Destroys superoxide anion radicals which are normally produced within the cells and which are toxic to biological systems. This is Superoxide dismutase [Mn], mitochondrial (SODA) from Chlamydomonas reinhardtii (Chlamydomonas smithii).